Consider the following 174-residue polypeptide: 2-C-methyl-D-erythritol 2,4-cyclodiphosphate synthase (174 aa).

The a divalent metal cation site is built by Asp-13, His-15, and His-61. Position 13-15 (Asp-13–His-15) interacts with 4-CDP-2-C-methyl-D-erythritol 2-phosphate. 4-CDP-2-C-methyl-D-erythritol 2-phosphate-binding positions include Asp-75–Gly-77, Thr-149–Asp-152, Phe-156, and Arg-159.

The protein belongs to the IspF family. In terms of assembly, homotrimer. It depends on a divalent metal cation as a cofactor.

The enzyme catalyses 4-CDP-2-C-methyl-D-erythritol 2-phosphate = 2-C-methyl-D-erythritol 2,4-cyclic diphosphate + CMP. The protein operates within isoprenoid biosynthesis; isopentenyl diphosphate biosynthesis via DXP pathway; isopentenyl diphosphate from 1-deoxy-D-xylulose 5-phosphate: step 4/6. In terms of biological role, involved in the biosynthesis of isopentenyl diphosphate (IPP) and dimethylallyl diphosphate (DMAPP), two major building blocks of isoprenoid compounds. Catalyzes the conversion of 4-diphosphocytidyl-2-C-methyl-D-erythritol 2-phosphate (CDP-ME2P) to 2-C-methyl-D-erythritol 2,4-cyclodiphosphate (ME-CPP) with a corresponding release of cytidine 5-monophosphate (CMP). This chain is 2-C-methyl-D-erythritol 2,4-cyclodiphosphate synthase, found in Bifidobacterium longum subsp. infantis (strain ATCC 15697 / DSM 20088 / JCM 1222 / NCTC 11817 / S12).